A 170-amino-acid polypeptide reads, in one-letter code: Peptide deformylase (170 aa).

Cysteine 91 and histidine 133 together coordinate Fe cation. Residue glutamate 134 is part of the active site. Histidine 137 contacts Fe cation.

Belongs to the polypeptide deformylase family. Requires Fe(2+) as cofactor.

It catalyses the reaction N-terminal N-formyl-L-methionyl-[peptide] + H2O = N-terminal L-methionyl-[peptide] + formate. Removes the formyl group from the N-terminal Met of newly synthesized proteins. Requires at least a dipeptide for an efficient rate of reaction. N-terminal L-methionine is a prerequisite for activity but the enzyme has broad specificity at other positions. This is Peptide deformylase from Aliivibrio fischeri (strain ATCC 700601 / ES114) (Vibrio fischeri).